Here is a 391-residue protein sequence, read N- to C-terminus: Terminal nucleotidyltransferase 5C (391 aa).

The protein belongs to the TENT family. Interacts with BCCIP and PABPC1; the interaction has no effect on TENT5C poly(A) polymerase function. Interacts with PLK4; this interaction leads to the TENT5C recruitment into the centrosome.

It localises to the nucleus. It is found in the cytoplasm. Its subcellular location is the cytoskeleton. The protein resides in the microtubule organizing center. The protein localises to the centrosome. It catalyses the reaction RNA(n) + ATP = RNA(n)-3'-adenine ribonucleotide + diphosphate. Functionally, catalyzes the transfer of one adenosine molecule from an ATP to an mRNA poly(A) tail bearing a 3'-OH terminal group and enhances mRNA stability and gene expression. Can also elongate RNA oligos ending with uridine molecule, provided that the sequence is adenosine-rich. Mainly targets mRNAs encoding endoplasmic reticulum-targeted protein. Its function is as follows. (Microbial infection) Seems to enhance replication of some viruses, including yellow fever virus, in response to type I interferon. The polypeptide is Terminal nucleotidyltransferase 5C (Homo sapiens (Human)).